We begin with the raw amino-acid sequence, 319 residues long: Ribosomal protein L11 methyltransferase (319 aa).

S-adenosyl-L-methionine-binding residues include threonine 165, glycine 186, aspartate 208, and asparagine 251.

It belongs to the methyltransferase superfamily. PrmA family.

The protein localises to the cytoplasm. The catalysed reaction is L-lysyl-[protein] + 3 S-adenosyl-L-methionine = N(6),N(6),N(6)-trimethyl-L-lysyl-[protein] + 3 S-adenosyl-L-homocysteine + 3 H(+). Methylates ribosomal protein L11. The sequence is that of Ribosomal protein L11 methyltransferase from Limosilactobacillus reuteri subsp. reuteri (strain JCM 1112) (Lactobacillus reuteri).